Here is a 431-residue protein sequence, read N- to C-terminus: Tyrosine--tRNA ligase (431 aa).

Residue Tyr33 coordinates L-tyrosine. The short motif at 38 to 47 is the 'HIGH' region element; it reads PTADSLHIGS. Residues Tyr172 and Gln176 each coordinate L-tyrosine. A 'KMSKS' region motif is present at residues 234–238; it reads KFGKS. ATP is bound at residue Lys237. An S4 RNA-binding domain is found at 364-431; that stretch reads INIVEVLNEK…KKNYFVLNVK (68 aa).

Belongs to the class-I aminoacyl-tRNA synthetase family. TyrS type 1 subfamily. Homodimer.

The protein resides in the cytoplasm. The catalysed reaction is tRNA(Tyr) + L-tyrosine + ATP = L-tyrosyl-tRNA(Tyr) + AMP + diphosphate + H(+). Functionally, catalyzes the attachment of tyrosine to tRNA(Tyr) in a two-step reaction: tyrosine is first activated by ATP to form Tyr-AMP and then transferred to the acceptor end of tRNA(Tyr). The protein is Tyrosine--tRNA ligase of Flavobacterium psychrophilum (strain ATCC 49511 / DSM 21280 / CIP 103535 / JIP02/86).